Here is a 356-residue protein sequence, read N- to C-terminus: Sulfate/thiosulfate import ATP-binding protein CysA (356 aa).

The region spanning 3 to 237 is the ABC transporter domain; that stretch reads IEVKNLVKRF…PKNSFVFHFL (235 aa). Residue 35-42 coordinates ATP; it reads GPSGSGKT.

This sequence belongs to the ABC transporter superfamily. Sulfate/tungstate importer (TC 3.A.1.6) family. As to quaternary structure, the complex is composed of two ATP-binding proteins (CysA), two transmembrane proteins (CysT and CysW) and a solute-binding protein (CysP).

The protein localises to the cell inner membrane. The enzyme catalyses sulfate(out) + ATP + H2O = sulfate(in) + ADP + phosphate + H(+). It carries out the reaction thiosulfate(out) + ATP + H2O = thiosulfate(in) + ADP + phosphate + H(+). Its function is as follows. Part of the ABC transporter complex CysAWTP involved in sulfate/thiosulfate import. Responsible for energy coupling to the transport system. The protein is Sulfate/thiosulfate import ATP-binding protein CysA of Leptospira interrogans serogroup Icterohaemorrhagiae serovar copenhageni (strain Fiocruz L1-130).